Consider the following 552-residue polypeptide: Hydroxylamine reductase (552 aa).

[2Fe-2S] cluster contacts are provided by C5, C8, C20, and C27. Residues H251, E275, C319, C407, C435, C460, E494, and K496 each coordinate hybrid [4Fe-2O-2S] cluster. C407 bears the Cysteine persulfide mark.

It belongs to the HCP family. The cofactor is [2Fe-2S] cluster. Requires hybrid [4Fe-2O-2S] cluster as cofactor.

The protein resides in the cytoplasm. The catalysed reaction is A + NH4(+) + H2O = hydroxylamine + AH2 + H(+). Catalyzes the reduction of hydroxylamine to form NH(3) and H(2)O. The protein is Hydroxylamine reductase of Escherichia coli (strain UTI89 / UPEC).